The following is a 210-amino-acid chain: Protein RCR2 (210 aa).

The chain crosses the membrane as a helical span at residues 41–61 (WIFFIFFIVALLILLFSTAKV). Residues 125 to 149 (PNGKTEYLAPPPLSEEQASSTDKDL) form a disordered region. A Phosphoserine modification is found at Ser161. Polar residues predominate over residues 175–199 (NNFVNGQSNRNEQHSPTVESSSFDV). The interval 175–210 (NNFVNGQSNRNEQHSPTVESSSFDVNNAPARAKVSK) is disordered. A Phosphothreonine modification is found at Thr191.

To yeast YBR005W.

Its subcellular location is the membrane. The sequence is that of Protein RCR2 (RCR2) from Saccharomyces cerevisiae (strain ATCC 204508 / S288c) (Baker's yeast).